The primary structure comprises 1248 residues: Structural maintenance of chromosomes protein 1B (1248 aa).

32-39 (GPNGSGKS) contributes to the ATP binding site. A coiled-coil region spans residues 163 to 502 (EFIGEYEAKK…EGKRQQKRAE (340 aa)). An SMC hinge domain is found at 514 to 629 (SVFGRLLDLC…ETVEEARHIA (116 aa)). Residues Lys-648, Lys-713, and Lys-1032 each carry the N6-acetyllysine modification. A coiled-coil region spans residues 666 to 912 (WDEKELHNLR…REVGKLQKEV (247 aa)). Residues 1219–1228 (PDTEDQEGSR) are compositionally biased toward basic and acidic residues. The interval 1219–1248 (PDTEDQEGSRSHRKPRVPRVSMSPKSPQSR) is disordered.

Belongs to the SMC family. SMC1 subfamily. As to quaternary structure, forms a heterodimer with SMC3. Component of a meiosis-specific cohesin complex, probably composed of the SMC1B and SMC3 heterodimer attached via their SMC hinge domain, RAD21 (or its meiosis-specific related protein REC8), which link them, and STAG3, which interacts with RAD21 or REC8. The cohesin complex interacts with the cohesin loading complex subunits NIPBL/Scc2 (via HEAT repeats) and MAU2/Scc4. NIPBL directly contacts all members of the complex, RAD21, SMC1A/B, SMC3 and STAG1. In terms of tissue distribution, spermatocytes (at protein level). Testis and ovary specific. Not expressed in somatic cells.

It localises to the nucleus. It is found in the chromosome. The protein resides in the centromere. Its function is as follows. Meiosis-specific component of cohesin complex. Required for the maintenance of meiotic cohesion, but not, or only to a minor extent, for its establishment. Contributes to axial element (AE) formation and the organization of chromatin loops along the AE. Plays a key role in synapsis, recombination and chromosome movements. The cohesin complex is required for the cohesion of sister chromatids after DNA replication. The cohesin complex apparently forms a large proteinaceous ring within which sister chromatids can be trapped. At anaphase, the complex is cleaved and dissociates from chromatin, allowing sister chromatids to segregate. The meiosis-specific cohesin complex probably replaces mitosis specific cohesin complex when it dissociates from chromatin during prophase I. This is Structural maintenance of chromosomes protein 1B (Smc1b) from Mus musculus (Mouse).